Here is a 173-residue protein sequence, read N- to C-terminus: Large ribosomal subunit protein uL10 (173 aa).

Belongs to the universal ribosomal protein uL10 family. In terms of assembly, part of the ribosomal stalk of the 50S ribosomal subunit. The N-terminus interacts with L11 and the large rRNA to form the base of the stalk. The C-terminus forms an elongated spine to which L12 dimers bind in a sequential fashion forming a multimeric L10(L12)X complex.

Forms part of the ribosomal stalk, playing a central role in the interaction of the ribosome with GTP-bound translation factors. The polypeptide is Large ribosomal subunit protein uL10 (rplJ) (Synechocystis sp. (strain ATCC 27184 / PCC 6803 / Kazusa)).